The sequence spans 229 residues: ABC transporter I family member 1 (229 aa).

Residues 11 to 228 enclose the ABC transporter domain; the sequence is LLLQNVSCMR…LIDMLDRADI (218 aa). 43–50 is an ATP binding site; the sequence is GTNGSGKS.

It belongs to the ABC transporter superfamily. ABCI family.

The protein resides in the membrane. The enzyme catalyses heme b(in) + ATP + H2O = heme b(out) + ADP + phosphate + H(+). Its function is as follows. Part of the ABC transporter complex CcmAB involved in the biogenesis of c-type cytochromes; once thought to export heme, this seems not to be the case, but its exact role is uncertain. Responsible for energy coupling to the transport system. The chain is ABC transporter I family member 1 (ABCI1) from Arabidopsis thaliana (Mouse-ear cress).